We begin with the raw amino-acid sequence, 242 residues long: NAD-dependent protein deacetylase (242 aa).

The Deacetylase sirtuin-type domain maps to 1-242; sequence MQQFEEVHSI…EFVEGLSSRK (242 aa). Positions 23, 27, 34, 35, 102, 104, 105, and 120 each coordinate NAD(+). Phenylalanine 34 provides a ligand contact to nicotinamide. The nicotinamide site is built by isoleucine 104 and aspartate 105. Catalysis depends on histidine 120, which acts as the Proton acceptor. Positions 128, 131, 148, and 151 each coordinate Zn(2+). Positions 187, 188, 213, and 231 each coordinate NAD(+).

Belongs to the sirtuin family. Class U subfamily. Zn(2+) is required as a cofactor.

It is found in the cytoplasm. The catalysed reaction is N(6)-acetyl-L-lysyl-[protein] + NAD(+) + H2O = 2''-O-acetyl-ADP-D-ribose + nicotinamide + L-lysyl-[protein]. In terms of biological role, NAD-dependent protein deacetylase which modulates the activities of several enzymes which are inactive in their acetylated form. The protein is NAD-dependent protein deacetylase of Bacillus cereus (strain ATCC 10987 / NRS 248).